Consider the following 254-residue polypeptide: uncharacterized protein (254 aa).

The S4 RNA-binding domain occupies 14–81 (IRLQKVLSQA…DSLVYLALNK (68 aa)). D119 (nucleophile) is an active-site residue.

Belongs to the pseudouridine synthase RsuA family.

The enzyme catalyses a uridine in RNA = a pseudouridine in RNA. This is an uncharacterized protein from Mycobacterium bovis (strain ATCC BAA-935 / AF2122/97).